The primary structure comprises 287 residues: UPF0098 protein AF_1698 (287 aa).

It belongs to the UPF0098 family.

The polypeptide is UPF0098 protein AF_1698 (Archaeoglobus fulgidus (strain ATCC 49558 / DSM 4304 / JCM 9628 / NBRC 100126 / VC-16)).